The chain runs to 245 residues: PF03932 family protein CutC (245 aa).

Belongs to the CutC family.

Its subcellular location is the cytoplasm. The sequence is that of PF03932 family protein CutC from Rhizobium meliloti (strain 1021) (Ensifer meliloti).